The chain runs to 353 residues: MLNDILTGYGIFILEILTILLLILAVVGLIISYRQHNKSKVGELEIKDLSEEFNEQVRLLRDFNLSEEEQKQRTKAEKKAEKQNAKKRKEKLKKGETLEDEKKACVYVLDFCGDISASETTALREEISAILNVAKSEDEVLLRLESPGGIVHNYGFAASQLSRLKQKGIKLTVAVDKVAASGGYMMACVADKIVSAPFAVIGSIGVVAQIPNVHRLLKKHDVDVDVMTAGEFKRTVTVLGENTEKGKQKFQQELEETHKLFKQFVSQNRPCLDIDKIATGEHWFGQQAIALQLVDEISTSDDLILEKMKEKQVLNVKYRLKKSLIKKFGRQAEESAINIIHRYSTKQSRDFMY.

A helical transmembrane segment spans residues 11 to 31 (IFILEILTILLLILAVVGLII). Over residues 70–84 (QKQRTKAEKKAEKQN) the composition is skewed to basic and acidic residues. Residues 70–93 (QKQRTKAEKKAEKQNAKKRKEKLK) are disordered. Residue S181 is the Nucleophile of the active site. The Proton donor/acceptor role is filled by K233.

This sequence belongs to the peptidase S49 family.

It is found in the cell membrane. Possible protease. In Haemophilus influenzae (strain ATCC 51907 / DSM 11121 / KW20 / Rd), this protein is Probable protease SohB (sohB).